The following is a 99-amino-acid chain: Small ribosomal subunit protein uS17 (99 aa).

Belongs to the universal ribosomal protein uS17 family. Part of the 30S ribosomal subunit.

Its function is as follows. One of the primary rRNA binding proteins, it binds specifically to the 5'-end of 16S ribosomal RNA. This is Small ribosomal subunit protein uS17 from Thermosipho africanus (strain TCF52B).